Here is a 265-residue protein sequence, read N- to C-terminus: MGNFRPKKRFGQHLLISKGVIQKIVECLDIKEDDTVVEIGVGTGQLTEEILRRNPKIVYGIEIDKTVYPIIEERFKDFKNFVLIKEDFFDVDLRKLTDGKIKLTGNLPYNVASHILVNTAFYIDILQLAVFMIQKEVAQKLVGKPKTKDYTFMSVFLQTFFDIDYVMSVPARFFSPPPKVTSAVIRMIPKEKLPVSLDHMKKYKNFVSMLFSNRRKMLRSKIDKDILERAGIDPKARAEELSVDDFIRLFSEHLLYKHDGKNENS.

S-adenosyl-L-methionine-binding residues include His13, Leu15, Gly40, Glu62, Asp87, and Asn106.

The protein belongs to the class I-like SAM-binding methyltransferase superfamily. rRNA adenine N(6)-methyltransferase family. RsmA subfamily.

The protein localises to the cytoplasm. The enzyme catalyses adenosine(1518)/adenosine(1519) in 16S rRNA + 4 S-adenosyl-L-methionine = N(6)-dimethyladenosine(1518)/N(6)-dimethyladenosine(1519) in 16S rRNA + 4 S-adenosyl-L-homocysteine + 4 H(+). Its function is as follows. Specifically dimethylates two adjacent adenosines (A1518 and A1519) in the loop of a conserved hairpin near the 3'-end of 16S rRNA in the 30S particle. May play a critical role in biogenesis of 30S subunits. This chain is Ribosomal RNA small subunit methyltransferase A, found in Persephonella marina (strain DSM 14350 / EX-H1).